The following is a 339-amino-acid chain: Anthranilate phosphoribosyltransferase (339 aa).

5-phospho-alpha-D-ribose 1-diphosphate-binding positions include Gly-86, 89 to 90 (GD), Thr-94, 96 to 99 (NIST), 114 to 122 (KHGNRGVSS), and Ser-126. Residue Gly-86 coordinates anthranilate. Residue Ser-98 coordinates Mg(2+). Position 117 (Asn-117) interacts with anthranilate. Position 172 (Arg-172) interacts with anthranilate. Asp-230 and Glu-231 together coordinate Mg(2+).

The protein belongs to the anthranilate phosphoribosyltransferase family. In terms of assembly, homodimer. It depends on Mg(2+) as a cofactor.

The enzyme catalyses N-(5-phospho-beta-D-ribosyl)anthranilate + diphosphate = 5-phospho-alpha-D-ribose 1-diphosphate + anthranilate. The protein operates within amino-acid biosynthesis; L-tryptophan biosynthesis; L-tryptophan from chorismate: step 2/5. In terms of biological role, catalyzes the transfer of the phosphoribosyl group of 5-phosphorylribose-1-pyrophosphate (PRPP) to anthranilate to yield N-(5'-phosphoribosyl)-anthranilate (PRA). This Photobacterium profundum (strain SS9) protein is Anthranilate phosphoribosyltransferase.